The sequence spans 520 residues: Putative transporter svop-1 (520 aa).

Over 1-85 (MGDKAILTEV…LGFGRFQLKL (85 aa)) the chain is Cytoplasmic. The chain crosses the membrane as a helical span at residues 86–106 (SILTGMAWMADAMEMMLLSLI). Over 107–120 (SPALACEWGISSVQ) the chain is Extracellular. The chain crosses the membrane as a helical span at residues 121–141 (QALVTTCVFSGMMLSSTFWGK). At 142–157 (ICDRFGRRKGLTFSTL) the chain is on the cytoplasmic side. The helical transmembrane segment at 158–178 (VACIMGVISGMSPHFYVLLFF) threads the bilayer. Arg179 is a topological domain (extracellular). A helical transmembrane segment spans residues 180 to 200 (GLTGFGIGGVPQSVTLYAEFL). Residues 201-208 (PTAQRAKC) lie on the Cytoplasmic side of the membrane. The chain crosses the membrane as a helical span at residues 209–229 (VVLIESFWAIGAVFEALLAYF). Residues 230–237 (VMESFGWR) lie on the Extracellular side of the membrane. Residues 238-258 (ALMFLSSLPLGIFAVASFWLP) form a helical membrane-spanning segment. Residues 259–319 (ESARFDMASG…LLSPDLRKTT (61 aa)) lie on the Cytoplasmic side of the membrane. Residues 320 to 340 (ILLWCIWAITAFSYYGMVLFT) form a helical membrane-spanning segment. Residues 341 to 372 (TVLFQSHDECHGGLFSNGTQMEVCQPLTRSDY) are Extracellular-facing. A helical membrane pass occupies residues 373-393 (FDLLSTTLAEFPGLIITVLII). Topologically, residues 394-410 (EWFGRKKTMALEYAVFA) are cytoplasmic. The helical transmembrane segment at 411-431 (IFTFLLYFCLDRFTVTVLIFV) threads the bilayer. The Extracellular segment spans residues 432-434 (ARA). The helical transmembrane segment at 435-455 (FISGAFQCAYVYTPEVYPTTL) threads the bilayer. Residues 456–461 (RAVGLG) are Cytoplasmic-facing. A helical transmembrane segment spans residues 462–487 (TCSAMARIGAIVTPFIAQVASEKSLS). Residues 488–489 (LP) lie on the Extracellular side of the membrane. A helical transmembrane segment spans residues 490-509 (IGIYGTAAILGLIASLSLPI). Topologically, residues 510 to 520 (ETKGRQMMDSH) are cytoplasmic.

It belongs to the major facilitator superfamily.

It is found in the membrane. This is Putative transporter svop-1 from Caenorhabditis elegans.